Consider the following 261-residue polypeptide: CD40 ligand (261 aa).

The Cytoplasmic segment spans residues Met1–Lys22. The helical; Signal-anchor for type II membrane protein transmembrane segment at Ile23 to Leu46 threads the bilayer. Residues His47 to Leu261 lie on the Extracellular side of the membrane. One can recognise a THD domain in the interval Ile122 to Leu261. Cys178 and Cys218 are disulfide-bonded. A glycan (N-linked (GlcNAc...) asparagine) is linked at Asn240.

The protein belongs to the tumor necrosis factor family. Homotrimer. Interacts with CD28. CD40 ligand, soluble form: Exists as either a monomer or a homotrimer. Forms a ternary complex between CD40 and integrins for CD40-CD40LG signaling. The soluble form derives from the membrane form by proteolytic processing.

The protein localises to the cell membrane. Its subcellular location is the cell surface. It localises to the secreted. In terms of biological role, cytokine that acts as a ligand to CD40/TNFRSF5. Costimulates T-cell proliferation and cytokine production. Its cross-linking on T-cells generates a costimulatory signal which enhances the production of IL4 and IL10 in conjunction with the TCR/CD3 ligation and CD28 costimulation. Induces the activation of NF-kappa-B. Induces the activation of kinases MAPK8 and PAK2 in T-cells. Mediates B-cell proliferation in the absence of co-stimulus as well as IgE production in the presence of IL4. Involved in immunoglobulin class switching. Acts as a ligand for integrins, specifically ITGA5:ITGB1 and ITGAV:ITGB3; both integrins and the CD40 receptor are required for activation of CD40-CD40LG signaling, which have cell-type dependent effects, such as B-cell activation, NF-kappa-B signaling and anti-apoptotic signaling. The polypeptide is CD40 ligand (CD40LG) (Bos taurus (Bovine)).